A 324-amino-acid polypeptide reads, in one-letter code: UDP-N-acetylenolpyruvoylglucosamine reductase (324 aa).

One can recognise an FAD-binding PCMH-type domain in the interval arginine 39–histidine 220. Arginine 185 is an active-site residue. Serine 234 (proton donor) is an active-site residue. Residue glutamate 304 is part of the active site.

The protein belongs to the MurB family. FAD is required as a cofactor.

It localises to the cytoplasm. It catalyses the reaction UDP-N-acetyl-alpha-D-muramate + NADP(+) = UDP-N-acetyl-3-O-(1-carboxyvinyl)-alpha-D-glucosamine + NADPH + H(+). The protein operates within cell wall biogenesis; peptidoglycan biosynthesis. Its function is as follows. Cell wall formation. The polypeptide is UDP-N-acetylenolpyruvoylglucosamine reductase (Bartonella bacilliformis (strain ATCC 35685 / KC583 / Herrer 020/F12,63)).